A 315-amino-acid chain; its full sequence is Type II methyltransferase M.Bsp6I (315 aa).

In terms of domain architecture, SAM-dependent MTase C5-type spans 2–315 (LQIASLFAGV…IAENIYKSML (314 aa)). Residue Cys73 is part of the active site.

Belongs to the class I-like SAM-binding methyltransferase superfamily. C5-methyltransferase family.

The catalysed reaction is a 2'-deoxycytidine in DNA + S-adenosyl-L-methionine = a 5-methyl-2'-deoxycytidine in DNA + S-adenosyl-L-homocysteine + H(+). Its function is as follows. A methylase that recognizes the double-stranded sequence 5'-GCNGC-3', methylates C-? on both strands, and protects the DNA from cleavage by the Bsp6I endonuclease. This chain is Type II methyltransferase M.Bsp6I, found in Bacillus sp. (strain RFL6).